The chain runs to 860 residues: Leucine-rich repeat and death domain-containing protein 1 (860 aa).

Residues 1-103 (MSEKEGMSEV…TGTSQSLSSL (103 aa)) are disordered. Positions 50 to 72 (KSSNQIYETHPRQNTLESTSSSG) are enriched in polar residues. Positions 90-103 (TSTRTGTSQSLSSL) are enriched in low complexity. LRR repeat units lie at residues 139–163 (LGAD…ILKI), 164–186 (KYVK…DSGD), 187–210 (LLGL…IQLL), 211–233 (HNLR…ISQL), 235–256 (NIRQ…LECL), 257–279 (GNLE…LPSL), 281–302 (TLRV…LCFL), 303–325 (PKLI…IREL), 326–348 (KNLE…IFQL), 350–371 (KIKE…IENF), 372–394 (RELR…ISCC), 396–417 (MLEC…IHKL), 419–440 (NLRK…ISHL), 441–463 (NNIC…IKNC), 465–486 (KIIK…LCAL), 487–510 (DSLY…SFSK), 512–532 (LLHL…FCSL), 533–555 (INLK…ISNM), 557–578 (SLHV…LCTL), 579–601 (ENLQ…ICNL), 603–624 (GIQK…LCQL), 627–650 (LEQL…LSNM), 651–673 (TQLK…IGEL), 675–696 (NLVS…LLSL), 697–719 (NDLQ…IYNI), and 721–742 (SLKE…ICKG). The region spanning 764-852 (EKIFKIVANN…EIMDKITALN (89 aa)) is the Death domain. The stretch at 856-860 (RAIKF) is one LRR 27 repeat.

The polypeptide is Leucine-rich repeat and death domain-containing protein 1 (LRRD1) (Homo sapiens (Human)).